The primary structure comprises 295 residues: MNANGGHDIQLVIITGMSGAGKTVAIQSFEDLGFFCVDNLPPSLLPKFLELMKESSSKMSKVALVMDLRGREFFDSLIEALDEIGETSWITPRILFLDAKDSVLVSRYKETRRSHPLATTGLPLEGIQTERELLEELKGRSQIIYDTSDMKPKDLREKIVQHFAADHGHTFTVNVMSFGFKYGLPIDADLVFDVRFLPNPYYIDSMRPLTGKDQEVSSYVMKWNETQKFLEKLTELLSFMLPSYKREGKSQLVIAIGCTGGQHRSVTLAEYLADYFKKDYYTHVTHRDIEKKSRK.

16–23 is a binding site for ATP; sequence GMSGAGKT. Residue 67-70 coordinates GTP; sequence DLRG.

This sequence belongs to the RapZ-like family.

Its function is as follows. Displays ATPase and GTPase activities. This is Nucleotide-binding protein BLi03725/BL03417 from Bacillus licheniformis (strain ATCC 14580 / DSM 13 / JCM 2505 / CCUG 7422 / NBRC 12200 / NCIMB 9375 / NCTC 10341 / NRRL NRS-1264 / Gibson 46).